Reading from the N-terminus, the 198-residue chain is Recombination protein RecR (198 aa).

Residues 57 to 72 (CSICGNLTDDDPCHIC) form a C4-type zinc finger. Residues 80-175 (TTILVVEDAK…KVTRLARGLA (96 aa)) enclose the Toprim domain.

It belongs to the RecR family.

May play a role in DNA repair. It seems to be involved in an RecBC-independent recombinational process of DNA repair. It may act with RecF and RecO. This chain is Recombination protein RecR, found in Streptococcus pyogenes serotype M5 (strain Manfredo).